The sequence spans 1056 residues: RNA cytidine acetyltransferase (1056 aa).

286–295 (GRGKSAALGI) is an ATP binding site. A compositionally biased stretch (polar residues) spans 433–446 (QNNTSGRESTQTAV). The tract at residues 433 to 463 (QNNTSGRESTQTAVVSRDNKEKDSHLHSQSR) is disordered. A compositionally biased stretch (basic and acidic residues) spans 449–463 (RDNKEKDSHLHSQSR). R475 serves as a coordination point for ATP. The N-acetyltransferase domain maps to 566-706 (VLLPPIDPKD…VKLRDAKTLP (141 aa)). Acetyl-CoA-binding positions include 638–640 (IAT), 645–651 (ASMGYGS), and N739. Phosphoserine is present on residues S1001, S1007, and S1010.

Belongs to the RNA cytidine acetyltransferase family. NAT10 subfamily. As to quaternary structure, interacts with TAN1. Associates with 90S pre-ribosomal particles.

The protein localises to the nucleus. It is found in the nucleolus. It catalyses the reaction a cytidine in 18S rRNA + acetyl-CoA + ATP + H2O = an N(4)-acetylcytidine in 18S rRNA + ADP + phosphate + CoA + H(+). It carries out the reaction a cytidine in tRNA + acetyl-CoA + ATP + H2O = an N(4)-acetylcytidine in tRNA + ADP + phosphate + CoA + H(+). Functionally, RNA cytidine acetyltransferase with specificity toward both 18S rRNA and tRNAs. Catalyzes the formation of N(4)-acetylcytidine (ac4C) at positions 1280 and 1773 in 18S rRNA. Required for early nucleolar cleavages of precursor rRNA at sites A0, A1 and A2 during 18S rRNA synthesis. Catalyzes the formation of ac4C at position 12 in serine and leucine tRNAs. Requires the tRNA-binding adapter protein TAN1 for full tRNA acetyltransferase activity but not for 18S rRNA acetylation. In Saccharomyces cerevisiae (strain ATCC 204508 / S288c) (Baker's yeast), this protein is RNA cytidine acetyltransferase.